We begin with the raw amino-acid sequence, 275 residues long: Lacto-N-neotetraose biosynthesis glycosyltransferase LgtB (275 aa).

The protein belongs to the glycosyltransferase 25 family.

It participates in glycan metabolism; lacto-N-neotetraose biosynthesis. Its pathway is bacterial outer membrane biogenesis; lipooligosaccharide biosynthesis. Adds the second galactose to the lacto-N-tetraose chain in lipooligosaccharide (LOS). The chain is Lacto-N-neotetraose biosynthesis glycosyltransferase LgtB (lgtB) from Neisseria meningitidis serogroup B (strain ATCC BAA-335 / MC58).